The sequence spans 894 residues: Mitogen-activated protein kinase kinase kinase kinase 3 (894 aa).

Methionine 1 carries the N-acetylmethionine modification. The Protein kinase domain occupies 16–273 (FELIQRIGSG…AEKLLQHPFV (258 aa)). Residues 22–30 (IGSGTYGDV), lysine 45, and lysine 48 each bind ATP. Aspartate 136 acts as the Proton acceptor in catalysis. A phosphoserine mark is found at serine 329 and serine 398. The interval 410–536 (AHLEDDEGDD…DVPKPISNGL (127 aa)) is disordered. Positions 473–487 (QVPPRPPPPRLPPHK) are enriched in pro residues. Positions 513 to 529 (NEHRGTNLSRKEKKDVP) are enriched in basic and acidic residues. The CNH domain maps to 556–867 (PLKIHCASSW…IFRLLGSDRV (312 aa)).

Belongs to the protein kinase superfamily. STE Ser/Thr protein kinase family. STE20 subfamily. As to quaternary structure, interacts with SH3GL2. Interaction appears to regulate MAP4K3-mediated JNK activation. The cofactor is Mg(2+). In terms of tissue distribution, ubiquitously expressed in all tissues examined, with high levels in heart, brain, placenta, skeletal muscle, kidney and pancreas and lower levels in lung and liver.

It carries out the reaction L-seryl-[protein] + ATP = O-phospho-L-seryl-[protein] + ADP + H(+). The catalysed reaction is L-threonyl-[protein] + ATP = O-phospho-L-threonyl-[protein] + ADP + H(+). Serine/threonine kinase that plays a role in the response to environmental stress. Appears to act upstream of the JUN N-terminal pathway. Activator of the Hippo signaling pathway which plays a pivotal role in organ size control and tumor suppression by restricting proliferation and promoting apoptosis. MAP4Ks act in parallel to and are partially redundant with STK3/MST2 and STK4/MST2 in the phosphorylation and activation of LATS1/2, and establish MAP4Ks as components of the expanded Hippo pathway. The sequence is that of Mitogen-activated protein kinase kinase kinase kinase 3 from Homo sapiens (Human).